The chain runs to 791 residues: Phenylalanine--tRNA ligase beta subunit (791 aa).

The region spanning 39 to 148 is the tRNA-binding domain; that stretch reads AADFSGVVVA…ADAPVGADIR (110 aa). A B5 domain is found at 401 to 476; sequence PLRAPVRLRE…RVYGYDAIPR (76 aa). Mg(2+) contacts are provided by Asp454, Asp460, Glu463, and Glu464. The region spanning 697–790 is the FDX-ACB domain; the sequence is SRFPLVRRDL…LAADFGAKLR (94 aa).

The protein belongs to the phenylalanyl-tRNA synthetase beta subunit family. Type 1 subfamily. Tetramer of two alpha and two beta subunits. Mg(2+) is required as a cofactor.

The protein localises to the cytoplasm. The enzyme catalyses tRNA(Phe) + L-phenylalanine + ATP = L-phenylalanyl-tRNA(Phe) + AMP + diphosphate + H(+). In Methylococcus capsulatus (strain ATCC 33009 / NCIMB 11132 / Bath), this protein is Phenylalanine--tRNA ligase beta subunit.